Reading from the N-terminus, the 274-residue chain is Ubiquinone biosynthesis O-methyltransferase, mitochondrial (274 aa).

Residues 1-30 (MNSMNILNKVKNVKSYTRLVRQGFLSQQRN) constitute a mitochondrion transit peptide. S-adenosyl-L-methionine contacts are provided by Arg65, Gly88, Asp109, and Met154. Glu155, Glu158, and His159 together coordinate Mg(2+).

Belongs to the class I-like SAM-binding methyltransferase superfamily. UbiG/COQ3 family. In terms of assembly, component of a multi-subunit COQ enzyme complex, composed of at least coq3, coq4, coq5, coq6, coq7 and coq9. Mg(2+) is required as a cofactor.

It localises to the mitochondrion inner membrane. The catalysed reaction is 3,4-dihydroxy-5-(all-trans-decaprenyl)benzoate + S-adenosyl-L-methionine = 4-hydroxy-3-methoxy-5-(all-trans-decaprenyl)benzoate + S-adenosyl-L-homocysteine + H(+). The enzyme catalyses a 3-demethylubiquinone + S-adenosyl-L-methionine = a ubiquinone + S-adenosyl-L-homocysteine. It catalyses the reaction 3-demethylubiquinol-10 + S-adenosyl-L-methionine = ubiquinol-10 + S-adenosyl-L-homocysteine + H(+). It participates in cofactor biosynthesis; ubiquinone biosynthesis. In terms of biological role, O-methyltransferase required for two non-consecutive steps during ubiquinone biosynthesis. Catalyzes the 2 O-methylation of 3,4-dihydroxy-5-(all-trans-decaprenyl)benzoic acid into 4-hydroxy-3-methoxy-5-(all-trans-decaprenyl)benzoic acid. Also catalyzes the last step of ubiquinone biosynthesis by mediating methylation of 3-demethylubiquinone into ubiquinone. Also able to mediate the methylation of 3-demethylubiquinol-10 into ubiquinol-10. The chain is Ubiquinone biosynthesis O-methyltransferase, mitochondrial from Schizosaccharomyces pombe (strain 972 / ATCC 24843) (Fission yeast).